Consider the following 206-residue polypeptide: Small ribosomal subunit protein uS3 (206 aa).

The KH type-2 domain occupies 39–107 (IRSYINESFK…SVEVNVVGIK (69 aa)).

Belongs to the universal ribosomal protein uS3 family. Part of the 30S ribosomal subunit. Forms a tight complex with proteins S10 and S14.

Binds the lower part of the 30S subunit head. Binds mRNA in the 70S ribosome, positioning it for translation. The polypeptide is Small ribosomal subunit protein uS3 (Wolbachia sp. subsp. Brugia malayi (strain TRS)).